A 152-amino-acid chain; its full sequence is Ubiquitin-activating enzyme E1 Y (152 aa).

Cys-51 (glycyl thioester intermediate) is an active-site residue.

This sequence belongs to the ubiquitin-activating E1 family. In terms of assembly, monomer.

The catalysed reaction is ATP + ubiquitin + [E1 ubiquitin-activating enzyme]-L-cysteine = AMP + diphosphate + S-ubiquitinyl-[E1 ubiquitin-activating enzyme]-L-cysteine.. It functions in the pathway protein modification; protein ubiquitination. Functionally, activates ubiquitin by first adenylating its C-terminal glycine residue with ATP, and thereafter linking this residue to the side chain of a cysteine residue in E1, yielding a ubiquitin-E1 thioester and free AMP. The Y chromosome form could be involved in the survival and proliferation of differentiating spermatogonia. The sequence is that of Ubiquitin-activating enzyme E1 Y (UBE1Y) from Osphranter rufus (Red kangaroo).